A 272-amino-acid chain; its full sequence is HMP-PP phosphatase (272 aa).

The active-site Nucleophile is the aspartate 8. Positions 8, 10, and 212 each coordinate Mg(2+).

This sequence belongs to the HAD-like hydrolase superfamily. Cof family. Mg(2+) is required as a cofactor.

It carries out the reaction 4-amino-2-methyl-5-(diphosphooxymethyl)pyrimidine + H2O = 4-amino-2-methyl-5-(phosphooxymethyl)pyrimidine + phosphate + H(+). In terms of biological role, catalyzes the hydrolysis of 4-amino-2-methyl-5-hydroxymethylpyrimidine pyrophosphate (HMP-PP) to 4-amino-2-methyl-5-hydroxymethylpyrimidine phosphate (HMP-P). This is HMP-PP phosphatase from Cronobacter sakazakii (strain ATCC BAA-894) (Enterobacter sakazakii).